Here is a 506-residue protein sequence, read N- to C-terminus: Steroid (22S)-hydroxylase (506 aa).

Residues 12 to 32 traverse the membrane as a helical segment; the sequence is LLFFLPFILLALLTFYTTTVA. C449 serves as a coordination point for heme.

Belongs to the cytochrome P450 family. It depends on heme as a cofactor.

The protein localises to the membrane. The enzyme catalyses a C28-steroid + reduced [NADPH--hemoprotein reductase] + O2 = a (22S)-22-hydroxy C28-steroid + oxidized [NADPH--hemoprotein reductase] + H2O + H(+). It carries out the reaction campesterol + reduced [NADPH--hemoprotein reductase] + O2 = (22S)-22-hydroxycampesterol + oxidized [NADPH--hemoprotein reductase] + H2O + H(+). It catalyses the reaction campestanol + reduced [NADPH--hemoprotein reductase] + O2 = 6-deoxycathasterone + oxidized [NADPH--hemoprotein reductase] + H2O + H(+). It functions in the pathway plant hormone biosynthesis; brassinosteroid biosynthesis. Functionally, catalyzes the C22-alpha-hydroxylation step in brassinosteroid biosynthesis, which is the rate-limiting step in this biosynthetic pathway. Catalyzes the conversion of campesterol (CR) to (22S)-22-hydroxycampesterol (22-OHCR, 22-hydroxyCR) and of campestanol (CN) to 6-deoxocathasterone (6-deoxoCT). The polypeptide is Steroid (22S)-hydroxylase (Oryza sativa subsp. indica (Rice)).